A 162-amino-acid polypeptide reads, in one-letter code: Phosphopantetheine adenylyltransferase (162 aa).

Ser9 lines the substrate pocket. Residues 9-10 (SF) and His17 contribute to the ATP site. Residues Lys41, Thr73, and Arg87 each contribute to the substrate site. ATP is bound by residues 88 to 90 (GLR), Glu98, and 123 to 129 (YSFISSS).

The protein belongs to the bacterial CoaD family. As to quaternary structure, homohexamer. Mg(2+) serves as cofactor.

Its subcellular location is the cytoplasm. It catalyses the reaction (R)-4'-phosphopantetheine + ATP + H(+) = 3'-dephospho-CoA + diphosphate. It functions in the pathway cofactor biosynthesis; coenzyme A biosynthesis; CoA from (R)-pantothenate: step 4/5. Reversibly transfers an adenylyl group from ATP to 4'-phosphopantetheine, yielding dephospho-CoA (dPCoA) and pyrophosphate. This chain is Phosphopantetheine adenylyltransferase, found in Carboxydothermus hydrogenoformans (strain ATCC BAA-161 / DSM 6008 / Z-2901).